A 433-amino-acid chain; its full sequence is uncharacterized protein (433 aa).

An N-terminal signal peptide occupies residues 1–28 (MKICGLEKFRVFLSLISMVSLLCNGVNG). The Extracellular portion of the chain corresponds to 29-274 (FTIVRSMAVN…QAELEPKKTG (246 aa)). Over residues 235–250 (GENANPTANSGTSARS) the composition is skewed to polar residues. The segment at 235 to 266 (GENANPTANSGTSARSNRNEQNKMEEPARNQA) is disordered. A compositionally biased stretch (basic and acidic residues) spans 251–266 (NRNEQNKMEEPARNQA). A helical transmembrane segment spans residues 275–295 (VVVAGVTVSLAAGFVLALATL). The Cytoplasmic portion of the chain corresponds to 296 to 433 (LLMKKKQTSL…HDKGTDEDKG (138 aa)). 2 disordered regions span residues 320–340 (EEPV…PSFD) and 413–433 (KVIE…EDKG).

In terms of tissue distribution, component of the acid-insoluble and acid-soluble organic matrix of the aragonitic skeleton (at protein level).

The protein localises to the membrane. This is an uncharacterized protein from Acropora millepora (Staghorn coral).